Consider the following 150-residue polypeptide: Transcriptional repressor NrdR (150 aa).

A zinc finger spans residues 3–34 (CPFCGQLDSKVVDSRPDKGGAAIRRRRECESC). The 91-residue stretch at 49–139 (PLVLKKDGRR…VYRSFKDVNE (91 aa)) folds into the ATP-cone domain.

This sequence belongs to the NrdR family. Requires Zn(2+) as cofactor.

Its function is as follows. Negatively regulates transcription of bacterial ribonucleotide reductase nrd genes and operons by binding to NrdR-boxes. The sequence is that of Transcriptional repressor NrdR from Geobacter sulfurreducens (strain ATCC 51573 / DSM 12127 / PCA).